The sequence spans 250 residues: Homeobox protein DLL-1 (250 aa).

Disordered stretches follow at residues 40–66 and 84–106; these read YPSL…SGSN and SPYL…PDQQ. Residues 84–98 are compositionally biased toward polar residues; that stretch reads SPYLQSCNSNTTTQS. The homeobox DNA-binding region spans 125–184; that stretch reads IRKPRTIYSSLQLQALNHRFQQTQYLALPERAELAASLGVTQTQVKIWFQNKRSKYKKLI.

Belongs to the distal-less homeobox family.

The protein resides in the nucleus. The protein is Homeobox protein DLL-1 (dll1) of Xenopus laevis (African clawed frog).